The primary structure comprises 356 residues: Histidinol-phosphate aminotransferase 1 (356 aa).

The residue at position 213 (Lys213) is an N6-(pyridoxal phosphate)lysine.

Belongs to the class-II pyridoxal-phosphate-dependent aminotransferase family. Histidinol-phosphate aminotransferase subfamily. As to quaternary structure, homodimer. The cofactor is pyridoxal 5'-phosphate.

The enzyme catalyses L-histidinol phosphate + 2-oxoglutarate = 3-(imidazol-4-yl)-2-oxopropyl phosphate + L-glutamate. Its pathway is amino-acid biosynthesis; L-histidine biosynthesis; L-histidine from 5-phospho-alpha-D-ribose 1-diphosphate: step 7/9. The chain is Histidinol-phosphate aminotransferase 1 from Burkholderia pseudomallei (strain K96243).